Consider the following 471-residue polypeptide: MDMNEHRNRRLKLIMISATFGGLLFGYDTGVINGALPFMARPDQLDLTPVTEGLVTSILLLGAAFGALLCGRLADRYGRRKMILNLSFLFFLASLGTALAPNVFIMAVFRFLLGLAVGGASAMVPAFLAEMAPHEKRGRMVTQNELMIVGGQFLAYVFNAILGVTMANTGHVWRYMLVICAVPAIMLFASMLKVPESPRWLISKGKNSEALRVLKQIREDKRAEAECREIQEAVEKDTALEKASLKDFSTPWLRRLLWIGIGVAIVNQITGVNSIMYYGTQILKESGFGTKAALIANIGNGLISVIAVIFGIWLVGKVRRRPILLIGLAGTTTALLLIAIFSIVLDGSMALPYVVLSLTVLFLAFMQGCVGPVTWLVIAEIFPQRLRGLGSGISVFFLWILNFVIGFAFPILLSSVGLSFTFFIFVALGVLAIGFVYKFMPETKGRTLEELEEHFRSRHDHNTPEQSVIEV.

12 helical membrane passes run 13-33 (LIMI…GVIN), 50-70 (VTEG…ALLC), 88-108 (FLFF…IMAV), 111-131 (FLLG…LAEM), 146-166 (LMIV…GVTM), 175-195 (YMLV…LKVP), 256-276 (LLWI…NSIM), 295-315 (IANI…IWLV), 323-343 (ILLI…IFSI), 358-378 (LTVL…WLVI), 393-413 (ISVF…PILL), and 416-436 (VGLS…IGFV).

This sequence belongs to the major facilitator superfamily. Sugar transporter (TC 2.A.1.1) family.

It localises to the cell membrane. This Bacillus subtilis (strain 168) protein is Putative metabolite transport protein YncC (yncC).